The following is a 448-amino-acid chain: Phosphoglucosamine mutase (448 aa).

The active-site Phosphoserine intermediate is the S104. Positions 104, 245, 247, and 249 each coordinate Mg(2+). S104 carries the post-translational modification Phosphoserine.

The protein belongs to the phosphohexose mutase family. It depends on Mg(2+) as a cofactor. In terms of processing, activated by phosphorylation.

The catalysed reaction is alpha-D-glucosamine 1-phosphate = D-glucosamine 6-phosphate. In terms of biological role, catalyzes the conversion of glucosamine-6-phosphate to glucosamine-1-phosphate. The chain is Phosphoglucosamine mutase from Caulobacter vibrioides (strain ATCC 19089 / CIP 103742 / CB 15) (Caulobacter crescentus).